We begin with the raw amino-acid sequence, 499 residues long: Probable cytosol aminopeptidase (499 aa).

Residues lysine 263 and aspartate 268 each coordinate Mn(2+). Lysine 275 is a catalytic residue. Aspartate 286, aspartate 345, and glutamate 347 together coordinate Mn(2+). Arginine 349 is an active-site residue.

This sequence belongs to the peptidase M17 family. The cofactor is Mn(2+).

The protein resides in the cytoplasm. It catalyses the reaction Release of an N-terminal amino acid, Xaa-|-Yaa-, in which Xaa is preferably Leu, but may be other amino acids including Pro although not Arg or Lys, and Yaa may be Pro. Amino acid amides and methyl esters are also readily hydrolyzed, but rates on arylamides are exceedingly low.. The enzyme catalyses Release of an N-terminal amino acid, preferentially leucine, but not glutamic or aspartic acids.. Presumably involved in the processing and regular turnover of intracellular proteins. Catalyzes the removal of unsubstituted N-terminal amino acids from various peptides. This Chlamydia caviae (strain ATCC VR-813 / DSM 19441 / 03DC25 / GPIC) (Chlamydophila caviae) protein is Probable cytosol aminopeptidase.